The following is a 113-amino-acid chain: MVSFRAFTVAASLFATLAAATPLDTALPRAADQCNVSNQQCCNSVQQASSGPAALILGLLGVVLQDVNVLVGLDCSPITVIGGGNGGCNASPVCCENNSFGSLISIGCVPISI.

An N-terminal signal peptide occupies residues 1-20 (MVSFRAFTVAASLFATLAAA). 4 cysteine pairs are disulfide-bonded: Cys-34–Cys-94, Cys-41–Cys-88, Cys-42–Cys-75, and Cys-95–Cys-108. N-linked (GlcNAc...) asparagine glycosylation is present at Asn-35. A glycan (N-linked (GlcNAc...) asparagine) is linked at Asn-97.

The protein belongs to the fungal hydrophobin family. As to quaternary structure, self-assembles to form functional amyloid fibrils called rodlets. Self-assembly into fibrillar rodlets occurs spontaneously at hydrophobic:hydrophilic interfaces and the rodlets further associate laterally to form amphipathic monolayers.

Its subcellular location is the secreted. It localises to the cell wall. In terms of biological role, aerial growth, conidiation, and dispersal of filamentous fungi in the environment rely upon a capability of their secreting small amphipathic proteins called hydrophobins (HPBs) with low sequence identity. Class I can self-assemble into an outermost layer of rodlet bundles on aerial cell surfaces, conferring cellular hydrophobicity that supports fungal growth, development and dispersal; whereas Class II form highly ordered films at water-air interfaces through intermolecular interactions but contribute nothing to the rodlet structure. Fvh1 is a class I hydrophobin involved in fruiting body initiation. The polypeptide is Class I hydrophobin fvh1 (Flammulina velutipes (Agaricus velutipes)).